Here is a 611-residue protein sequence, read N- to C-terminus: Mitochondrial distribution and morphology protein 34 (611 aa).

Residues 1–195 (MAFNFNWSPL…LPAIIHRLSL (195 aa)) enclose the SMP-LTD domain. A compositionally biased stretch (polar residues) spans 325–342 (SAPLSSQDTASVASSQSR). Disordered regions lie at residues 325-347 (SAPL…GLPS), 361-402 (RHSK…STIT), 415-544 (SIIP…PTYT), and 587-611 (SYVG…AYRH). The segment covering 361 to 373 (RHSKAHARKRKKR) has biased composition (basic residues). 2 stretches are compositionally biased toward basic and acidic residues: residues 374–385 (VIDLRPHRKPTD) and 444–459 (TLRD…ERTN). Residues 520–529 (PLGPPAPAPI) are compositionally biased toward pro residues.

The protein belongs to the MDM34 family. In terms of assembly, component of the ER-mitochondria encounter structure (ERMES) or MDM complex, composed of MMM1, MDM10, MDM12 and MDM34.

It is found in the mitochondrion outer membrane. Functionally, component of the ERMES/MDM complex, which serves as a molecular tether to connect the endoplasmic reticulum (ER) and mitochondria. Components of this complex are involved in the control of mitochondrial shape and protein biogenesis, and function in nonvesicular lipid trafficking between the ER and mitochondria. MDM34 is required for the interaction of the ER-resident membrane protein MMM1 and the outer mitochondrial membrane-resident beta-barrel protein MDM10. This chain is Mitochondrial distribution and morphology protein 34, found in Paracoccidioides brasiliensis (strain Pb18).